A 239-amino-acid chain; its full sequence is tRNA (guanine-N(7)-)-methyltransferase (239 aa).

4 residues coordinate S-adenosyl-L-methionine: Glu-69, Glu-94, Asp-121, and Asp-144. The active site involves Asp-144. A substrate-binding site is contributed by Lys-148. An interaction with RNA region spans residues 150-155 (RHNKRR). Substrate-binding positions include Asp-180 and 217-220 (TKFE).

Belongs to the class I-like SAM-binding methyltransferase superfamily. TrmB family. In terms of assembly, monomer.

It catalyses the reaction guanosine(46) in tRNA + S-adenosyl-L-methionine = N(7)-methylguanosine(46) in tRNA + S-adenosyl-L-homocysteine. It functions in the pathway tRNA modification; N(7)-methylguanine-tRNA biosynthesis. Functionally, catalyzes the formation of N(7)-methylguanine at position 46 (m7G46) in tRNA. The protein is tRNA (guanine-N(7)-)-methyltransferase of Klebsiella pneumoniae subsp. pneumoniae (strain ATCC 700721 / MGH 78578).